The primary structure comprises 299 residues: Elongation factor Ts, mitochondrial (299 aa).

The N-terminal 18 residues, M1 to V18, are a transit peptide targeting the mitochondrion.

It belongs to the EF-Ts family.

The protein resides in the mitochondrion. In terms of biological role, associates with the EF-Tu.GDP complex and induces the exchange of GDP to GTP. It remains bound to the aminoacyl-tRNA.EF-Tu.GTP complex up to the GTP hydrolysis stage on the ribosome. This chain is Elongation factor Ts, mitochondrial (tsf1), found in Schizosaccharomyces pombe (strain 972 / ATCC 24843) (Fission yeast).